The primary structure comprises 260 residues: 3-methyl-2-oxobutanoate hydroxymethyltransferase (260 aa).

Mg(2+) contacts are provided by D42 and D81. Residues 42-43 (DS), D81, and K109 contribute to the 3-methyl-2-oxobutanoate site. E111 is a Mg(2+) binding site. Residue E178 is the Proton acceptor of the active site.

Belongs to the PanB family. In terms of assembly, homodecamer; pentamer of dimers. Mg(2+) serves as cofactor.

It localises to the cytoplasm. It carries out the reaction 3-methyl-2-oxobutanoate + (6R)-5,10-methylene-5,6,7,8-tetrahydrofolate + H2O = 2-dehydropantoate + (6S)-5,6,7,8-tetrahydrofolate. It functions in the pathway cofactor biosynthesis; (R)-pantothenate biosynthesis; (R)-pantoate from 3-methyl-2-oxobutanoate: step 1/2. Its function is as follows. Catalyzes the reversible reaction in which hydroxymethyl group from 5,10-methylenetetrahydrofolate is transferred onto alpha-ketoisovalerate to form ketopantoate. The sequence is that of 3-methyl-2-oxobutanoate hydroxymethyltransferase from Ruthia magnifica subsp. Calyptogena magnifica.